A 212-amino-acid chain; its full sequence is Large ribosomal subunit protein uL1 (212 aa).

Belongs to the universal ribosomal protein uL1 family. In terms of assembly, part of the 50S ribosomal subunit.

Binds directly to 23S rRNA. Probably involved in E site tRNA release. Its function is as follows. Protein L1 is also a translational repressor protein, it controls the translation of its operon by binding to its mRNA. The polypeptide is Large ribosomal subunit protein uL1 (Halobacterium salinarum (strain ATCC 29341 / DSM 671 / R1)).